The following is a 381-amino-acid chain: Homoserine O-succinyltransferase (381 aa).

An AB hydrolase-1 domain is found at 45–360; the sequence is NAVLVCHALN…PHGHDAFLLD (316 aa). Residue S151 is the Nucleophile of the active site. Residue R221 participates in substrate binding. Residues D321 and H354 contribute to the active site. A substrate-binding site is contributed by D355.

It belongs to the AB hydrolase superfamily. MetX family. Homodimer.

It is found in the cytoplasm. The enzyme catalyses L-homoserine + succinyl-CoA = O-succinyl-L-homoserine + CoA. It participates in amino-acid biosynthesis; L-methionine biosynthesis via de novo pathway; O-succinyl-L-homoserine from L-homoserine: step 1/1. Its function is as follows. Transfers a succinyl group from succinyl-CoA to L-homoserine, forming succinyl-L-homoserine. This is Homoserine O-succinyltransferase from Burkholderia vietnamiensis (strain G4 / LMG 22486) (Burkholderia cepacia (strain R1808)).